Here is a 187-residue protein sequence, read N- to C-terminus: Reactive Intermediate Deaminase A, chloroplastic (187 aa).

Residues 1–58 (MTWSVFRSINTPTLDLSTALRSTRTPLVAAGVGCATFAGVSLFRMSSRSPPFASLSVS) constitute a chloroplast transit peptide. Position 165 (Arg-165) interacts with substrate.

This sequence belongs to the RutC family. As to expression, expressed in leaves, petiols, petals, carpels and shoot apex.

It is found in the plastid. The protein localises to the chloroplast. The catalysed reaction is 2-iminobutanoate + H2O = 2-oxobutanoate + NH4(+). The enzyme catalyses 2-iminopropanoate + H2O = pyruvate + NH4(+). It functions in the pathway amino-acid biosynthesis; L-isoleucine biosynthesis; 2-oxobutanoate from L-threonine. Hydrolyzes the Ser-derived enamine/imine product of Thr dehydratase, protecting the plastidial branched-chain aminotransferase BCAT3 (AC Q9M401) from inactivation. Involved in Ile biosynthesis. In Arabidopsis thaliana (Mouse-ear cress), this protein is Reactive Intermediate Deaminase A, chloroplastic.